Reading from the N-terminus, the 856-residue chain is DNA endonuclease RBBP8 (856 aa).

The tract at residues 25–48 (ELWSKLKECHDKDLQELLMKIGKL) is essential for binding to the MRN complex and for RPA focus formation on DNA damage. Coiled-coil stretches lie at residues 38-87 (LQEL…EDRL) and 120-141 (ITEL…SEQL). Disordered regions lie at residues 143–174 (DMQK…DSPL) and 423–456 (DSEQ…DKEN). Residues 156–168 (ENPADTGDGEDGV) are compositionally biased toward acidic residues. Residues 493–515 (SSSRTKLTISLVPEKPDTKTILH) are damage-recruitment motif. Positions 695–732 (SPSQSISCKERSDIPSIENKKITSEKEHESKGEPYQKQ) are disordered. Residues 702–730 (CKERSDIPSIENKKITSEKEHESKGEPYQ) are compositionally biased toward basic and acidic residues. T806 carries the phosphothreonine modification. T818 carries the post-translational modification Phosphothreonine; by ATR.

It belongs to the COM1/SAE2/CtIP family. As to quaternary structure, homotetramer; formed by antiparallel association of helical extensions protruding from the N-termini of two parallel coiled-coil dimers. Interacts with the MRN complex; the interaction links DNA sensing to resection. Interacts with samhd1. Phosphorylation at Thr-818 by atr promotes recruitment to double-strand breaks (DSBs).

It localises to the nucleus. Its subcellular location is the chromosome. Functionally, endonuclease that cooperates with the MRE11-RAD50-NBN (MRN) complex in DNA-end resection, the first step of double-strand break (DSB) repair through the homologous recombination (HR) pathway. Functions downstream of the MRN complex and ATM, promotes ATR activation and its recruitment to DSBs in the S/G2 phase facilitating the generation of ssDNA. Specifically promotes the endonuclease activity of the MRN complex to clear DNA ends containing protein adducts: recruited to DSBs by nbn following phosphorylation, and promotes the endonuclease of mre11 to clear protein-DNA adducts and generate clean double-strand break ends. The MRN complex and rbbp8/CtIP are also required for chromosome alignment during metaphase. This is DNA endonuclease RBBP8 (rbbp8) from Xenopus laevis (African clawed frog).